Consider the following 682-residue polypeptide: DNA-directed RNA polymerase subunit beta' (682 aa).

Cys69, Cys71, Cys87, and Cys90 together coordinate Zn(2+). 3 residues coordinate Mg(2+): Asp491, Asp493, and Asp495.

The protein belongs to the RNA polymerase beta' chain family. RpoC1 subfamily. In plastids the minimal PEP RNA polymerase catalytic core is composed of four subunits: alpha, beta, beta', and beta''. When a (nuclear-encoded) sigma factor is associated with the core the holoenzyme is formed, which can initiate transcription. Requires Mg(2+) as cofactor. It depends on Zn(2+) as a cofactor.

The protein localises to the plastid. It localises to the chloroplast. The catalysed reaction is RNA(n) + a ribonucleoside 5'-triphosphate = RNA(n+1) + diphosphate. Functionally, DNA-dependent RNA polymerase catalyzes the transcription of DNA into RNA using the four ribonucleoside triphosphates as substrates. This is DNA-directed RNA polymerase subunit beta' from Lotus japonicus (Lotus corniculatus var. japonicus).